The sequence spans 482 residues: Nodulation protein T (482 aa).

A signal peptide spans methionine 1 to serine 17. The N-palmitoyl cysteine moiety is linked to residue cysteine 18. Cysteine 18 is lipidated: S-diacylglycerol cysteine.

Belongs to the outer membrane factor (OMF) (TC 1.B.17) family.

The protein localises to the cell membrane. The polypeptide is Nodulation protein T (nodT) (Rhizobium leguminosarum bv. viciae).